Reading from the N-terminus, the 490-residue chain is ATP synthase subunit alpha 1 (490 aa).

It belongs to the ATPase alpha/beta chains family. F-type ATPases have 2 components, CF(1) - the catalytic core - and CF(0) - the membrane proton channel. CF(1) has five subunits: alpha(3), beta(3), gamma(1), delta(1), epsilon(1). CF(0) has three main subunits: a(1), b(2) and c(9-12). The alpha and beta chains form an alternating ring which encloses part of the gamma chain. CF(1) is attached to CF(0) by a central stalk formed by the gamma and epsilon chains, while a peripheral stalk is formed by the delta and b chains.

Its subcellular location is the cell inner membrane. The enzyme catalyses ATP + H2O + 4 H(+)(in) = ADP + phosphate + 5 H(+)(out). In terms of biological role, produces ATP from ADP in the presence of a proton gradient across the membrane. The alpha chain is a regulatory subunit. The polypeptide is ATP synthase subunit alpha 1 (Legionella pneumophila (strain Paris)).